A 338-amino-acid chain; its full sequence is Heat-inducible transcription repressor HrcA (338 aa).

It belongs to the HrcA family.

Functionally, negative regulator of class I heat shock genes (grpE-dnaK-dnaJ and groELS operons). Prevents heat-shock induction of these operons. This Bacillus anthracis (strain A0248) protein is Heat-inducible transcription repressor HrcA.